A 332-amino-acid polypeptide reads, in one-letter code: Holliday junction branch migration complex subunit RuvB (332 aa).

Residues 1–181 (MSRILDNELM…FGITGHMEYY (181 aa)) form a large ATPase domain (RuvB-L) region. ATP is bound by residues Leu-20, Arg-21, Gly-62, Lys-65, Thr-66, Thr-67, 128-130 (EDF), Arg-171, Tyr-181, and Arg-218. Position 66 (Thr-66) interacts with Mg(2+). The segment at 182-252 (EAGDLTEIVE…ITDQALSMLD (71 aa)) is small ATPAse domain (RuvB-S). Residues 255–332 (QEGLDYVDQK…EHLGYEYMKE (78 aa)) are head domain (RuvB-H). 4 residues coordinate DNA: Arg-291, Arg-310, Arg-312, and Arg-315.

It belongs to the RuvB family. Homohexamer. Forms an RuvA(8)-RuvB(12)-Holliday junction (HJ) complex. HJ DNA is sandwiched between 2 RuvA tetramers; dsDNA enters through RuvA and exits via RuvB. An RuvB hexamer assembles on each DNA strand where it exits the tetramer. Each RuvB hexamer is contacted by two RuvA subunits (via domain III) on 2 adjacent RuvB subunits; this complex drives branch migration. In the full resolvosome a probable DNA-RuvA(4)-RuvB(12)-RuvC(2) complex forms which resolves the HJ.

It localises to the cytoplasm. It carries out the reaction ATP + H2O = ADP + phosphate + H(+). In terms of biological role, the RuvA-RuvB-RuvC complex processes Holliday junction (HJ) DNA during genetic recombination and DNA repair, while the RuvA-RuvB complex plays an important role in the rescue of blocked DNA replication forks via replication fork reversal (RFR). RuvA specifically binds to HJ cruciform DNA, conferring on it an open structure. The RuvB hexamer acts as an ATP-dependent pump, pulling dsDNA into and through the RuvAB complex. RuvB forms 2 homohexamers on either side of HJ DNA bound by 1 or 2 RuvA tetramers; 4 subunits per hexamer contact DNA at a time. Coordinated motions by a converter formed by DNA-disengaged RuvB subunits stimulates ATP hydrolysis and nucleotide exchange. Immobilization of the converter enables RuvB to convert the ATP-contained energy into a lever motion, pulling 2 nucleotides of DNA out of the RuvA tetramer per ATP hydrolyzed, thus driving DNA branch migration. The RuvB motors rotate together with the DNA substrate, which together with the progressing nucleotide cycle form the mechanistic basis for DNA recombination by continuous HJ branch migration. Branch migration allows RuvC to scan DNA until it finds its consensus sequence, where it cleaves and resolves cruciform DNA. The protein is Holliday junction branch migration complex subunit RuvB of Streptococcus sanguinis (strain SK36).